Here is a 163-residue protein sequence, read N- to C-terminus: Disulfide bond formation protein B 1 (163 aa).

Residues M1–L9 lie on the Cytoplasmic side of the membrane. A helical transmembrane segment spans residues F10 to Y26. At L27 to I44 the chain is on the periplasmic side. A disulfide bridge connects residues C36 and C39. Residues F45 to P61 form a helical membrane-spanning segment. The Cytoplasmic segment spans residues G62–R67. Residues I68 to A85 form a helical membrane-spanning segment. At R86–E142 the chain is on the periplasmic side. A disulfide bond links C101 and C128. A helical membrane pass occupies residues W143–R161. Over R162–A163 the chain is Cytoplasmic.

It belongs to the DsbB family.

It localises to the cell inner membrane. In terms of biological role, required for disulfide bond formation in some periplasmic proteins. Acts by oxidizing the DsbA protein. The protein is Disulfide bond formation protein B 1 (dsbB1) of Pseudomonas aeruginosa (strain ATCC 15692 / DSM 22644 / CIP 104116 / JCM 14847 / LMG 12228 / 1C / PRS 101 / PAO1).